Consider the following 298-residue polypeptide: Leucine-rich repeat-containing protein 55 (298 aa).

Residues 1–34 (MGDTWAQLPWPGPPHSALLLVFFLLAAGVMHSDA) form the signal peptide. Residues 35–65 (GASCPVLCTCRNQVVDCSNQRLFSVPPDLPM) form the LRRNT domain. Cystine bridges form between C38/C44 and C42/C51. 5 LRR repeats span residues 66 to 87 (DTRN…YLTC), 90 to 111 (ELRV…LFLH), 114 to 135 (RLAH…MFRE), 138 to 160 (GLVH…AFQG), and 163 to 186 (HLRD…EGLP). In terms of domain architecture, LRRCT spans 196–251 (NPWVCGCTMEPLLKWLRNRIQRCTADSQLAECRGPPEVEGAPLFSLTEESFKACHL). 2 disulfide bridges follow: C200-C227 and C202-C249. A helical transmembrane segment spans residues 259 to 279 (LFIAFVGFVVSIASVATNFLL).

In terms of assembly, interacts with KCNMA1.

It is found in the cell membrane. Its function is as follows. Auxiliary protein of the large-conductance, voltage and calcium-activated potassium channel (BK alpha). Modulates gating properties by producing a marked shift in the BK channel's voltage dependence of activation in the hyperpolarizing direction, and in the absence of calcium. The chain is Leucine-rich repeat-containing protein 55 (Lrrc55) from Rattus norvegicus (Rat).